A 152-amino-acid chain; its full sequence is Nucleoside diphosphate kinase (152 aa).

ATP-binding residues include K11, F59, R87, T93, R104, and N114. The active-site Pros-phosphohistidine intermediate is H117.

This sequence belongs to the NDK family. In terms of assembly, homotetramer. Mg(2+) serves as cofactor.

It is found in the cytoplasm. It carries out the reaction a 2'-deoxyribonucleoside 5'-diphosphate + ATP = a 2'-deoxyribonucleoside 5'-triphosphate + ADP. The catalysed reaction is a ribonucleoside 5'-diphosphate + ATP = a ribonucleoside 5'-triphosphate + ADP. Its function is as follows. Major role in the synthesis of nucleoside triphosphates other than ATP. The ATP gamma phosphate is transferred to the NDP beta phosphate via a ping-pong mechanism, using a phosphorylated active-site intermediate. The chain is Nucleoside diphosphate kinase from Prochlorococcus marinus (strain MIT 9515).